The sequence spans 143 residues: Midkine (143 aa).

The first 20 residues, 1-20 (MQHRGFLLLTLLALLALTSA), serve as a signal peptide directing secretion. Cystine bridges form between Cys37-Cys61, Cys45-Cys70, Cys52-Cys74, Cys84-Cys116, and Cys94-Cys126.

The protein belongs to the pleiotrophin family. In terms of assembly, homodimer. Interacts with ALK. Interacts with LRP1; promotes neuronal survival. Interacts with LRP2. Interacts with NCAM1. Interacts (via C-terminal) with PTPRZ1 (via chondroitin sulfate chains); this interaction is inhibited by PTN; this interaction promotes neuronal migration. Interacts with NCL; this interaction promotes NCL clustering and lateral movements of this complex into lipid rafts leading to MDK internalization. Interacts with LRP6 and LRP8: this interaction is calcium dependent. Interacts with ITGA4. Interacts with ITGA6. Interacts with ITGB1. Interacts with ITGA4:ITGB1 complex; this interaction mediates MDK-induced osteoblast cells migration through PXN phosphorylation. Interacts with ITGA6:ITGB1 complex; this interaction mediates MDK-induced neurite outgrowth. Interacts with NOTCH2; this interaction mediates a nuclear accumulation of NOTCH2 and therefore activation of NOTCH2 signaling leading to interaction between HES1 and STAT3. Interacts with GPC2 (via heparan sulfate chain); this interaction is inhibited by heparin followed by chondroitin sulfate E; this interaction induces GPC2 clustering through heparan sulfate chain; this interaction induces neuronal cell adhesion and neurite outgrowth. Interacts with SDC3; this interaction induces SDC3 clustering; this interaction induces neuronal cell adhesion and neurite outgrowth. Interacts with SDC1. Interacts with CSPG5; this interaction promotes elongation of oligodendroglial precursor-like cells. As to expression, expressed in various tumor cell lines. In insulinoma tissue predominantly expressed in precancerous lesions.

It is found in the secreted. In terms of biological role, secreted protein that functions as a cytokine and growth factor and mediates its signal through cell-surface proteoglycan and non-proteoglycan receptors. Binds cell-surface proteoglycan receptors via their chondroitin sulfate (CS) groups. Thereby regulates many processes like inflammatory response, cell proliferation, cell adhesion, cell growth, cell survival, tissue regeneration, cell differentiation and cell migration. Participates in inflammatory processes by exerting two different activities. Firstly, mediates neutrophils and macrophages recruitment to the sites of inflammation both by direct action by cooperating namely with ITGB2 via LRP1 and by inducing chemokine expression. This inflammation can be accompanied by epithelial cell survival and smooth muscle cell migration after renal and vessel damage, respectively. Secondly, suppresses the development of tolerogenic dendric cells thereby inhibiting the differentiation of regulatory T cells and also promote T cell expansion through NFAT signaling and Th1 cell differentiation. Promotes tissue regeneration after injury or trauma. After heart damage negatively regulates the recruitment of inflammatory cells and mediates cell survival through activation of anti-apoptotic signaling pathways via MAPKs and AKT pathways through the activation of angiogenesis. Also facilitates liver regeneration as well as bone repair by recruiting macrophage at trauma site and by promoting cartilage development by facilitating chondrocyte differentiation. Plays a role in brain by promoting neural precursor cells survival and growth through interaction with heparan sulfate proteoglycans. Binds PTPRZ1 and promotes neuronal migration and embryonic neurons survival. Binds SDC3 or GPC2 and mediates neurite outgrowth and cell adhesion. Binds chondroitin sulfate E and heparin leading to inhibition of neuronal cell adhesion induced by binding with GPC2. Binds CSPG5 and promotes elongation of oligodendroglial precursor-like cells. Also binds ITGA6:ITGB1 complex; this interaction mediates MDK-induced neurite outgrowth. Binds LRP1; promotes neuronal survival. Binds ITGA4:ITGB1 complex; this interaction mediates MDK-induced osteoblast cells migration through PXN phosphorylation. Binds anaplastic lymphoma kinase (ALK) which induces ALK activation and subsequent phosphorylation of the insulin receptor substrate (IRS1), followed by the activation of mitogen-activated protein kinase (MAPK) and PI3-kinase, and the induction of cell proliferation. Promotes epithelial to mesenchymal transition through interaction with NOTCH2. During arteriogenesis, plays a role in vascular endothelial cell proliferation by inducing VEGFA expression and release which in turn induces nitric oxide synthase expression. Moreover activates vasodilation through nitric oxide synthase activation. Negatively regulates bone formation in response to mechanical load by inhibiting Wnt/beta-catenin signaling in osteoblasts. In addition plays a role in hippocampal development, working memory, auditory response, early fetal adrenal gland development and the female reproductive system. This chain is Midkine, found in Homo sapiens (Human).